The primary structure comprises 104 residues: Flagellar hook-basal body complex protein FliE (104 aa).

It belongs to the FliE family.

The protein localises to the bacterial flagellum basal body. The protein is Flagellar hook-basal body complex protein FliE of Pectobacterium carotovorum subsp. carotovorum (strain PC1).